Here is a 121-residue protein sequence, read N- to C-terminus: MGRIFLDHIGGTRLFSCANCDAILTNRSELISTRFTGATGRAFLFNKVVNLQYSEVQDRVMLTGRHMVRDVSCKNCNSKLGWIYEFATEDSQRYKEGRVILERALVRESEGFEEHVPSDNS.

A Yippee domain is found at 13 to 110 (RLFSCANCDA…LERALVRESE (98 aa)). 4 residues coordinate Zn(2+): cysteine 17, cysteine 20, cysteine 73, and cysteine 76. A Phosphoserine modification is found at serine 118.

Belongs to the yippee family. In terms of assembly, identified in the CTLH complex that contains GID4, RANBP9 and/or RANBP10, MKLN1, MAEA, RMND5A (or alternatively its paralog RMND5B), GID8, ARMC8, WDR26 and YPEL5. Within this complex, MAEA, RMND5A (or alternatively its paralog RMND5B), GID8, WDR26, and RANBP9 and/or RANBP10 form the catalytic core, while GID4, MKLN1, ARMC8 and YPEL5 have ancillary roles. Interacts with RANBP9 and RANBP10.

It localises to the nucleus. The protein localises to the cytoplasm. Its subcellular location is the cytoskeleton. The protein resides in the microtubule organizing center. It is found in the centrosome. It localises to the spindle pole. The protein localises to the midbody. Functionally, component of the CTLH E3 ubiquitin-protein ligase complex that selectively accepts ubiquitin from UBE2H and mediates ubiquitination and subsequent proteasomal degradation of the transcription factor HBP1. Required for normal cell proliferation. This Macaca fascicularis (Crab-eating macaque) protein is Protein yippee-like 5 (YPEL5).